Reading from the N-terminus, the 101-residue chain is Small ribosomal subunit protein bS18c (101 aa).

The protein belongs to the bacterial ribosomal protein bS18 family. Part of the 30S ribosomal subunit.

The protein resides in the plastid. Its subcellular location is the chloroplast. The sequence is that of Small ribosomal subunit protein bS18c from Aethionema grandiflorum (Persian stone-cress).